The following is a 911-amino-acid chain: Gem-associated protein 4a (911 aa).

Component of the core survival motor neuron (SMN) complex composed of Smn, Gem2, Gem3, rig/Gem5 and one of 3 almost identical Gem4 paralogs encoded by Glos/Gem4a, Gem4b or Gem4c. Interacts with Smn; the interaction is probably indirect.

In terms of biological role, component of the survival motor neuron (SMN) complex that catalyzes the assembly of small nuclear ribonucleoproteins (snRNPs), the building blocks of the spliceosome, and thereby plays an important role in the splicing of cellular pre-mRNAs. One of 3 almost identical paralogs (Glos/Gem4a, Gem4b and Gem4c), resulting from a genomic triplication, that have some redundant function. Required for neuromuscular function and organismal viability. The chain is Gem-associated protein 4a from Drosophila melanogaster (Fruit fly).